The primary structure comprises 363 residues: Cobalt-precorrin-5B C(1)-methyltransferase (363 aa).

Belongs to the CbiD family.

It catalyses the reaction Co-precorrin-5B + S-adenosyl-L-methionine = Co-precorrin-6A + S-adenosyl-L-homocysteine. It participates in cofactor biosynthesis; adenosylcobalamin biosynthesis; cob(II)yrinate a,c-diamide from sirohydrochlorin (anaerobic route): step 6/10. In terms of biological role, catalyzes the methylation of C-1 in cobalt-precorrin-5B to form cobalt-precorrin-6A. The sequence is that of Cobalt-precorrin-5B C(1)-methyltransferase from Treponema denticola (strain ATCC 35405 / DSM 14222 / CIP 103919 / JCM 8153 / KCTC 15104).